The following is a 130-amino-acid chain: Protein ApaG (130 aa).

The 125-residue stretch at 3–127 (KAETRGITVT…FSLDSPHLRR (125 aa)) folds into the ApaG domain.

The protein is Protein ApaG of Methylorubrum populi (strain ATCC BAA-705 / NCIMB 13946 / BJ001) (Methylobacterium populi).